The following is a 1221-amino-acid chain: Reverse gyrase subunit B (1221 aa).

The RG N-terminal-type zinc-finger motif lies at 56-97 (NEPVAIFGSSCVLCGGDCSSVRLTSRIGICERCLPVDTETLR). Residues Cys66, Cys69, Cys85, and Cys88 each coordinate Zn(2+). Residues Gln161 and 178–185 (APTGTGKT) each bind ATP. A Helicase ATP-binding domain is found at 165–400 (TRRLVKGCSF…AVVRELFDFE (236 aa)). The DEAD box signature appears at 284-287 (DDVD). Residues 424–600 (AVERIVRKAG…PLSLNTLMKL (177 aa)) form the Helicase C-terminal domain. The Toprim domain occupies 779–935 (SALMIVESPN…QVYRTEFHEV (157 aa)). Glu785 is a Mg(2+) binding site. The RG C-terminal-type zinc finger occupies 856-882 (LGRCSECGEQVVGSEECPNCGGEVELK). Zn(2+)-binding residues include Cys859, Cys862, Cys872, and Cys875. Asp904 contributes to the Mg(2+) binding site. In terms of domain architecture, Topo IA-type catalytic spans 953 to 1221 (DAGRVSAQIL…MLHLAGVSGR (269 aa)).

This sequence in the C-terminal section; belongs to the type IA topoisomerase family. The protein in the N-terminal section; belongs to the DEAD box helicase family. DDVD subfamily. In terms of assembly, heterodimer of an RgyrA and RgyrB subunit. The topoisomerase domain is shared between the two subunits. Zn(2+) is required as a cofactor. The cofactor is Mg(2+). In terms of processing, the N-terminus is partially blocked.

It localises to the cytoplasm. The catalysed reaction is ATP + H2O = ADP + phosphate + H(+). Its function is as follows. Modifies the topological state of DNA by introducing positive supercoils in an ATP-dependent process; dATP also allows positive supercoiling. Increases the linking number in steps of +1. Only this subunit binds ATP, it does so in a DNA- and RgyA-independent manner. Hydrolyzes ATP only in the presence of DNA. The RgyA subunit transiently cleaves a single DNA strand and remains covalently bound to the 5' DNA end probably through a tyrosine residue. It changes linking number in steps of one, and nicks DNA preferentially at 5'-CNNN | 3'-sites with a strong preference for 4 pyrimidine residues. There are about 1000 heterodimers per cell. May be involved in rewinding the DNA strands in the regions of the chromosome that have opened up to allow transcription or replication. Functionally, this subunit expressed in E.coli only has DNA-dependent ATPase activity at 80 degrees Celsius. Reverse gyrase activity is reconstituted after incubation at 80 degrees Celsius for 5 minutes, positive supercoiling requires ATP and Mg(2+). In the presence of ATP it binds and nicks substrate but does not make closed product. This is Reverse gyrase subunit B from Methanopyrus kandleri (strain AV19 / DSM 6324 / JCM 9639 / NBRC 100938).